Consider the following 978-residue polypeptide: Exocyst complex component 5 (978 aa).

Residues Met1–Ile11 are compositionally biased toward polar residues. 2 disordered regions span residues Met1–Gln87 and Thr122–Tyr246. Composition is skewed to low complexity over residues Pro36–Thr52 and Ser62–Thr86. Polar residues predominate over residues Thr122–Lys142. Over residues Pro143–Pro245 the composition is skewed to low complexity. Positions Asn303–Glu325 form a coiled coil.

It belongs to the SEC10 family. The exocyst complex is composed of sec3/exoc1, sec5/exoc2, sec6/exoc3, sec8/exoc4, sec10/exoc5, sec15/exoc6, exo70/exoc7 and exo84/exoc8.

Its function is as follows. Component of the exocyst complex involved in the docking of exocytic vesicles with fusion sites on the plasma membrane. This is Exocyst complex component 5 (exoc5) from Dictyostelium discoideum (Social amoeba).